The primary structure comprises 194 residues: CASP-like protein 1D1 (194 aa).

Basic and acidic residues predominate over residues 1–16 (MGSDETKSTLDTERST). The tract at residues 1–23 (MGSDETKSTLDTERSTVPRTGTT) is disordered. At 1–31 (MGSDETKSTLDTERSTVPRTGTTTKSCSITQ) the chain is on the cytoplasmic side. A helical membrane pass occupies residues 32 to 52 (VVLRFVLFAATLTSIVVMVTS). The Extracellular segment spans residues 53–77 (KQTKNIFIPGTPIRIPAAKFTNSPA). A helical membrane pass occupies residues 78–98 (LIYFVVALSVACFYSIVSTFV). The Cytoplasmic portion of the chain corresponds to 99-109 (TVSAFKKHSCS). The chain crosses the membrane as a helical span at residues 110 to 130 (AILLLNLAIMDAVMVGIVASA). The Extracellular segment spans residues 131–163 (TGAGGGVAYLGLKGNKEVRWGKICNIYDKFCRH). The chain crosses the membrane as a helical span at residues 164–184 (VGGAIAVSLFASVILLLLSII). Topologically, residues 185-194 (SVLSLYKKIR) are cytoplasmic.

The protein belongs to the Casparian strip membrane proteins (CASP) family. In terms of assembly, homodimer and heterodimers.

Its subcellular location is the cell membrane. The protein is CASP-like protein 1D1 of Arabidopsis lyrata subsp. lyrata (Lyre-leaved rock-cress).